The sequence spans 39 residues: Large ribosomal subunit protein bL12 (39 aa).

Belongs to the bacterial ribosomal protein bL12 family. In terms of assembly, homodimer. Part of the ribosomal stalk of the 50S ribosomal subunit. Forms a multimeric L10(L12)X complex, where L10 forms an elongated spine to which 2 to 4 L12 dimers bind in a sequential fashion. Binds GTP-bound translation factors.

Its function is as follows. Forms part of the ribosomal stalk which helps the ribosome interact with GTP-bound translation factors. Is thus essential for accurate translation. The chain is Large ribosomal subunit protein bL12 (rplL) from Arthrobacter glacialis.